We begin with the raw amino-acid sequence, 349 residues long: tRNA pseudouridine synthase D (349 aa).

Position 27 (phenylalanine 27) interacts with substrate. Aspartate 80 serves as the catalytic Nucleophile. A substrate-binding site is contributed by asparagine 129. The TRUD domain occupies 155–303 (GVPNYFGAQR…VEAARRAMLL (149 aa)). Substrate is bound at residue phenylalanine 329.

The protein belongs to the pseudouridine synthase TruD family.

The enzyme catalyses uridine(13) in tRNA = pseudouridine(13) in tRNA. Its function is as follows. Responsible for synthesis of pseudouridine from uracil-13 in transfer RNAs. This Shigella flexneri protein is tRNA pseudouridine synthase D.